Here is a 360-residue protein sequence, read N- to C-terminus: 1-deoxy-D-xylulose 5-phosphate reductoisomerase (360 aa).

NADPH contacts are provided by Ser7, Gly8, Ser9, Ile10, and Asn115. Lys116 lines the 1-deoxy-D-xylulose 5-phosphate pocket. An NADPH-binding site is contributed by Glu117. Asp135 serves as a coordination point for Mn(2+). 1-deoxy-D-xylulose 5-phosphate contacts are provided by Ser136, Glu137, Ser159, and His182. Glu137 serves as a coordination point for Mn(2+). Position 188 (Gly188) interacts with NADPH. Positions 195, 200, 201, and 204 each coordinate 1-deoxy-D-xylulose 5-phosphate. Glu204 is a binding site for Mn(2+).

This sequence belongs to the DXR family. Mg(2+) is required as a cofactor. The cofactor is Mn(2+).

It carries out the reaction 2-C-methyl-D-erythritol 4-phosphate + NADP(+) = 1-deoxy-D-xylulose 5-phosphate + NADPH + H(+). It participates in isoprenoid biosynthesis; isopentenyl diphosphate biosynthesis via DXP pathway; isopentenyl diphosphate from 1-deoxy-D-xylulose 5-phosphate: step 1/6. Functionally, catalyzes the NADPH-dependent rearrangement and reduction of 1-deoxy-D-xylulose-5-phosphate (DXP) to 2-C-methyl-D-erythritol 4-phosphate (MEP). The protein is 1-deoxy-D-xylulose 5-phosphate reductoisomerase of Campylobacter fetus subsp. fetus (strain 82-40).